We begin with the raw amino-acid sequence, 414 residues long: Serine hydroxymethyltransferase (414 aa).

Residues L117 and 121–123 (GHL) each bind (6S)-5,6,7,8-tetrahydrofolate. N6-(pyridoxal phosphate)lysine is present on K226. Residue 349 to 351 (SPF) coordinates (6S)-5,6,7,8-tetrahydrofolate.

The protein belongs to the SHMT family. Homodimer. Pyridoxal 5'-phosphate serves as cofactor.

The protein resides in the cytoplasm. The enzyme catalyses (6R)-5,10-methylene-5,6,7,8-tetrahydrofolate + glycine + H2O = (6S)-5,6,7,8-tetrahydrofolate + L-serine. It functions in the pathway one-carbon metabolism; tetrahydrofolate interconversion. It participates in amino-acid biosynthesis; glycine biosynthesis; glycine from L-serine: step 1/1. Catalyzes the reversible interconversion of serine and glycine with tetrahydrofolate (THF) serving as the one-carbon carrier. Also exhibits THF-independent aldolase activity toward beta-hydroxyamino acids, producing glycine and aldehydes, via a retro-aldol mechanism. This is Serine hydroxymethyltransferase from Methanospirillum hungatei JF-1 (strain ATCC 27890 / DSM 864 / NBRC 100397 / JF-1).